A 317-amino-acid polypeptide reads, in one-letter code: Acetyl-coenzyme A carboxylase carboxyl transferase subunit alpha (317 aa).

Residues 40-293 (LEVRVREAIV…GDVIANALGE (254 aa)) enclose the CoA carboxyltransferase C-terminal domain.

Belongs to the AccA family. In terms of assembly, acetyl-CoA carboxylase is a heterohexamer composed of biotin carboxyl carrier protein (AccB), biotin carboxylase (AccC) and two subunits each of ACCase subunit alpha (AccA) and ACCase subunit beta (AccD).

Its subcellular location is the cytoplasm. It catalyses the reaction N(6)-carboxybiotinyl-L-lysyl-[protein] + acetyl-CoA = N(6)-biotinyl-L-lysyl-[protein] + malonyl-CoA. It functions in the pathway lipid metabolism; malonyl-CoA biosynthesis; malonyl-CoA from acetyl-CoA: step 1/1. Component of the acetyl coenzyme A carboxylase (ACC) complex. First, biotin carboxylase catalyzes the carboxylation of biotin on its carrier protein (BCCP) and then the CO(2) group is transferred by the carboxyltransferase to acetyl-CoA to form malonyl-CoA. This chain is Acetyl-coenzyme A carboxylase carboxyl transferase subunit alpha, found in Rhizobium leguminosarum bv. trifolii (strain WSM2304).